The sequence spans 326 residues: DNA-directed RNA polymerase subunit alpha (326 aa).

The interval 1-231 is alpha N-terminal domain (alpha-NTD); that stretch reads MQTNLLKPKI…DQLVVFAALE (231 aa). Residues 247–326 are alpha C-terminal domain (alpha-CTD); the sequence is VDPMLMRPVD…ESWPPANLEK (80 aa).

It belongs to the RNA polymerase alpha chain family. As to quaternary structure, homodimer. The RNAP catalytic core consists of 2 alpha, 1 beta, 1 beta' and 1 omega subunit. When a sigma factor is associated with the core the holoenzyme is formed, which can initiate transcription.

The catalysed reaction is RNA(n) + a ribonucleoside 5'-triphosphate = RNA(n+1) + diphosphate. In terms of biological role, DNA-dependent RNA polymerase catalyzes the transcription of DNA into RNA using the four ribonucleoside triphosphates as substrates. This Polynucleobacter necessarius subsp. necessarius (strain STIR1) protein is DNA-directed RNA polymerase subunit alpha.